The primary structure comprises 172 residues: Conglutin-7 (172 aa).

The signal sequence occupies residues 1-21 (MAKLTILVALALFLLAAHASA). 4 disulfide bridges follow: Cys-33-Cys-116, Cys-45-Cys-103, Cys-104-Cys-152, and Cys-118-Cys-160. Residues 54–98 (QRDEDSYGRDPYSPSQDPYSPSQDPDRRDPYSPSPYDRRGAGSSQ) are disordered. Residues 62-76 (RDPYSPSQDPYSPSQ) show a composition bias toward low complexity. Pro-67, Pro-74, and Pro-86 each carry 4-hydroxyproline. Basic and acidic residues predominate over residues 77-98 (DPDRRDPYSPSPYDRRGAGSSQ).

Belongs to the 2S seed storage albumins family. Post-translationally, the hydroxyproline modifications determined by mass spectrometry are probably 4-hydroxyproline as determined for other extracellular plant proteins. In terms of tissue distribution, expressed in seeds, not expressed in leaves, roots and pegs.

In terms of biological role, weak inhibitor of trypsin. The sequence is that of Conglutin-7 from Arachis hypogaea (Peanut).